The sequence spans 1939 residues: Myosin-4 (1939 aa).

The region spanning 33–82 (DAKSSVFVVDAKESYVKATVQSREGGKVTAKTEGGATVTVKEDQVFSMNP) is the Myosin N-terminal SH3-like domain. Residue Ser36 is modified to Phosphoserine. Residues Thr64 and Thr69 each carry the phosphothreonine modification. At Ser79 the chain carries Phosphoserine. The Myosin motor domain maps to 86–782 (DKIEDMAMMT…LLGTLEEMRD (697 aa)). Lys130 is subject to N6,N6,N6-trimethyllysine. 179–186 (GESGAGKT) is a binding site for ATP. At Tyr389 the chain carries Phosphotyrosine. Thr391 bears the Phosphothreonine mark. The residue at position 392 (Ser392) is a Phosphoserine. Position 419 is a phosphothreonine (Thr419). Tyr424 bears the Phosphotyrosine mark. Ser625 is modified (phosphoserine). The tract at residues 659–681 (LNKLMTNLKSTHPHFVRCLIPNE) is actin-binding. His757 bears the Pros-methylhistidine mark. Residues 761 to 775 (KFGHTKVFFKAGLLG) are actin-binding. Thr776 bears the Phosphothreonine mark. The region spanning 785-814 (LAQLITRTQAVCRGYLMRVEFRKMMERRES) is the IQ domain. A coiled-coil region spans residues 843-1939 (LLKSAETEKE…EVHTKVISEE (1097 aa)). Phosphoserine is present on residues Ser1092 and Ser1096. 2 disordered regions span residues 1128–1147 (AERA…SREL) and 1153–1172 (RLEE…KKRE). A phosphoserine mark is found at Ser1162 and Ser1237. Thr1241 is subject to Phosphothreonine. Ser1243 bears the Phosphoserine mark. At Thr1255 the chain carries Phosphothreonine. Ser1261 carries the post-translational modification Phosphoserine. Thr1265 is modified (phosphothreonine). Ser1278 carries the post-translational modification Phosphoserine. Thr1286 is subject to Phosphothreonine. Residues Ser1288, Ser1292, Ser1303, Ser1306, and Ser1413 each carry the phosphoserine modification. At Tyr1464 the chain carries Phosphotyrosine. The residue at position 1467 (Thr1467) is a Phosphothreonine. Ser1474 carries the post-translational modification Phosphoserine. Tyr1492 bears the Phosphotyrosine mark. Ser1495 bears the Phosphoserine mark. Thr1501 is modified (phosphothreonine). Ser1514 carries the phosphoserine modification. A Phosphothreonine modification is found at Thr1517. Residues Ser1542, Ser1547, Ser1554, Ser1574, Ser1600, Ser1603, Ser1714, and Ser1726 each carry the phosphoserine modification. Phosphothreonine is present on residues Thr1730 and Thr1736. Position 1739 is a phosphoserine (Ser1739).

The protein belongs to the TRAFAC class myosin-kinesin ATPase superfamily. Myosin family. Muscle myosin is a hexameric protein that consists of 2 heavy chain subunits (MHC), 2 alkali light chain subunits (MLC) and 2 regulatory light chain subunits (MLC-2).

Its subcellular location is the cytoplasm. The protein localises to the myofibril. Muscle contraction. The protein is Myosin-4 of Rattus norvegicus (Rat).